The primary structure comprises 159 residues: 3-hydroxyacyl-[acyl-carrier-protein] dehydratase FabZ (159 aa).

H58 is a catalytic residue.

This sequence belongs to the thioester dehydratase family. FabZ subfamily.

Its subcellular location is the cytoplasm. The enzyme catalyses a (3R)-hydroxyacyl-[ACP] = a (2E)-enoyl-[ACP] + H2O. In terms of biological role, involved in unsaturated fatty acids biosynthesis. Catalyzes the dehydration of short chain beta-hydroxyacyl-ACPs and long chain saturated and unsaturated beta-hydroxyacyl-ACPs. The polypeptide is 3-hydroxyacyl-[acyl-carrier-protein] dehydratase FabZ (Helicobacter pylori (strain G27)).